An 801-amino-acid polypeptide reads, in one-letter code: Cadherin-20 (801 aa).

An N-terminal signal peptide occupies residues 1-34 (MWTTGRMSNAKSWLGLGTSLYFWALMDLTATVLS). Residues 35 to 59 (STPMPEVELETLFSGRSQSHQRSKR) constitute a propeptide that is removed on maturation. Topologically, residues 60–619 (SWVWNQFFVL…AYLLPVSLSR (560 aa)) are extracellular. 5 consecutive Cadherin domains span residues 61–165 (WVWN…EPKF), 166–274 (LDGP…PPRF), 275–389 (PQKH…PPVF), 390–494 (EPGF…APEF), and 494–610 (FPRF…SPEA). The N-linked (GlcNAc...) asparagine glycan is linked to Asn-261. N-linked (GlcNAc...) asparagine glycans are attached at residues Asn-420, Asn-461, and Asn-542. A helical transmembrane segment spans residues 620-640 (GALIAILACIFVLLVLVLLIL). Residues 641–801 (SMRRHRKQPY…GASEGPAPLW (161 aa)) lie on the Cytoplasmic side of the membrane.

In terms of tissue distribution, expressed in brain. Highest level of expression in the retina. In embryo it is synthesized by the forebrain, anterior neural ridge, developing visual system, primitive external granular layer of the cerebellum and a subset of neural crest cells likely to develop into melanoblasts.

Its subcellular location is the cell membrane. Functionally, cadherins are calcium-dependent cell adhesion proteins. They preferentially interact with themselves in a homophilic manner in connecting cells; cadherins may thus contribute to the sorting of heterogeneous cell types. The protein is Cadherin-20 (Cdh20) of Mus musculus (Mouse).